Consider the following 2149-residue polypeptide: Oxygen-regulated protein 1 (2149 aa).

A compositionally biased stretch (polar residues) spans 1–20; it reads MSDTPSTGFSMIHPTSSEGQ. Residues 1–25 are disordered; the sequence is MSDTPSTGFSMIHPTSSEGQVPSPR. One can recognise a Doublecortin 1 domain in the interval 36 to 118; the sequence is KRISFYKSGD…GRKVQPVDLD (83 aa). Residues 127-148 form a disordered region; that stretch reads WLSSRAVSTHAPPHSVAAPGMP. One can recognise a Doublecortin 2 domain in the interval 152 to 231; sequence RSLVVFRNGD…REPFKPGNYD (80 aa). 3 disordered regions span residues 351-373, 1435-1456, and 1583-1613; these read VSKTGPSNNDEKSEMSFPGRTES, MEEPRTSEEPGSVTNSVTSSER, and VTSDWSDYRPDSDSEQAYKTSSDDPNDSGEL. A compositionally biased stretch (polar residues) spans 1446 to 1456; the sequence is SVTNSVTSSER.

As to quaternary structure, interacts (via the doublecortin domains) with microtubules. Interacts with RP1L1. Interacts with MAK.

It localises to the cytoplasm. Its subcellular location is the cytoskeleton. The protein localises to the cilium axoneme. The protein resides in the cell projection. It is found in the cilium. It localises to the photoreceptor outer segment. Microtubule-associated protein regulating the stability and length of the microtubule-based axoneme of photoreceptors. Required for the differentiation of photoreceptor cells, it plays a role in the organization of the outer segment of rod and cone photoreceptors ensuring the correct orientation and higher-order stacking of outer segment disks along the photoreceptor axoneme. This Saimiri boliviensis boliviensis (Bolivian squirrel monkey) protein is Oxygen-regulated protein 1 (RP1).